The sequence spans 142 residues: Small ribosomal subunit protein bS16 (142 aa).

A disordered region spans residues 88 to 142 (GAEGTLRQPEGKTPFVAPDNGSVIIPEAITPKAEKAEEAPAEDAAPAEDDAEKAE). Residues 126–142 (APAEDAAPAEDDAEKAE) are compositionally biased toward acidic residues.

Belongs to the bacterial ribosomal protein bS16 family.

The protein is Small ribosomal subunit protein bS16 of Kocuria rhizophila (strain ATCC 9341 / DSM 348 / NBRC 103217 / DC2201).